We begin with the raw amino-acid sequence, 62 residues long: Large ribosomal subunit protein uL30 (62 aa).

The protein belongs to the universal ribosomal protein uL30 family. Part of the 50S ribosomal subunit.

This is Large ribosomal subunit protein uL30 from Polynucleobacter asymbioticus (strain DSM 18221 / CIP 109841 / QLW-P1DMWA-1) (Polynucleobacter necessarius subsp. asymbioticus).